Reading from the N-terminus, the 336-residue chain is Foldase protein PrsA (336 aa).

Residues 1–22 (MKSAKKLLSVLCLGIFILTFTA) form the signal peptide. A lipid anchor (N-palmitoyl cysteine) is attached at cysteine 23. Cysteine 23 carries the S-diacylglycerol cysteine lipid modification. Residues 194 to 286 (PNTMNVSHIL…FGYHIIKINS (93 aa)) enclose the PpiC domain.

This sequence belongs to the PrsA family.

Its subcellular location is the cell membrane. The enzyme catalyses [protein]-peptidylproline (omega=180) = [protein]-peptidylproline (omega=0). Functionally, plays a major role in protein secretion by helping the post-translocational extracellular folding of several secreted proteins. The polypeptide is Foldase protein PrsA (Clostridium botulinum (strain Kyoto / Type A2)).